The following is a 199-amino-acid chain: UPF0637 protein LACR_1918 (199 aa).

The protein belongs to the UPF0637 family.

In Lactococcus lactis subsp. cremoris (strain SK11), this protein is UPF0637 protein LACR_1918.